A 254-amino-acid polypeptide reads, in one-letter code: Nickel import ATP-binding protein NikD (254 aa).

The ABC transporter domain maps to 2–241; sequence PQQIELRNIA…PKHTVTRSLV (240 aa). Position 36–43 (36–43) interacts with ATP; that stretch reads GGSGSGKS.

It belongs to the ABC transporter superfamily. Nickel importer (TC 3.A.1.5.3) family. The complex is composed of two ATP-binding proteins (NikD and NikE), two transmembrane proteins (NikB and NikC) and a solute-binding protein (NikA).

Its subcellular location is the cell inner membrane. It carries out the reaction Ni(2+)(out) + ATP + H2O = Ni(2+)(in) + ADP + phosphate + H(+). Its function is as follows. Part of the ABC transporter complex NikABCDE involved in nickel import. Responsible for energy coupling to the transport system. This chain is Nickel import ATP-binding protein NikD, found in Escherichia coli (strain K12).